We begin with the raw amino-acid sequence, 398 residues long: Acetate kinase 1 (398 aa).

Asn9 provides a ligand contact to Mg(2+). An ATP-binding site is contributed by Lys16. Substrate is bound at residue Arg89. Asp146 (proton donor/acceptor) is an active-site residue. ATP contacts are provided by residues 206-210, 281-283, and 329-333; these read HLGNG, DCR, and GIGEN. Glu384 provides a ligand contact to Mg(2+).

Belongs to the acetokinase family. As to quaternary structure, homodimer. Mg(2+) serves as cofactor. The cofactor is Mn(2+).

It is found in the cytoplasm. It catalyses the reaction acetate + ATP = acetyl phosphate + ADP. The protein operates within metabolic intermediate biosynthesis; acetyl-CoA biosynthesis; acetyl-CoA from acetate: step 1/2. Functionally, catalyzes the formation of acetyl phosphate from acetate and ATP. Can also catalyze the reverse reaction. This Vibrio vulnificus (strain CMCP6) protein is Acetate kinase 1.